The chain runs to 115 residues: DNA-binding protein PH1060 (115 aa).

The protein belongs to the PDCD5 family.

The polypeptide is DNA-binding protein PH1060 (Pyrococcus horikoshii (strain ATCC 700860 / DSM 12428 / JCM 9974 / NBRC 100139 / OT-3)).